The primary structure comprises 87 residues: MATKKAGGSSRNGRDSAGRRLGVKKADGQYVIPGNIIVRQRGTKIHPGTNVGLGKDHTIFALIEGRVEFLTKRNHKIVNVKEIASTY.

Positions 1–24 (MATKKAGGSSRNGRDSAGRRLGVK) are disordered.

Belongs to the bacterial ribosomal protein bL27 family.

This chain is Large ribosomal subunit protein bL27, found in Rickettsia massiliae (strain Mtu5).